Here is a 5043-residue protein sequence, read N- to C-terminus: Polyketide synthase PksJ (5043 aa).

An adenylation 1 region spans residues 141–481 (AVITDRGMHQ…ELPEIETSYT (341 aa)). The 78-residue stretch at 590-667 (RVREEIQKHL…RLASYLSEHE (78 aa)) folds into the Carrier 1 domain. Ser-627 is subject to O-(pantetheine 4'-phosphoryl)serine. The condensation stretch occupies residues 690–989 (QATFQPLSEV…NMLPIRSELN (300 aa)). An adenylation 2 region spans residues 1181–1578 (TYRELDEKST…EHPGILECVV (398 aa)). In terms of domain architecture, Carrier 2 spans 1654–1729 (TSPKNIQDTV…NISQYITEQR (76 aa)). Ser-1689 is modified (O-(pantetheine 4'-phosphoryl)serine). Residues 1760–2186 (DDSVAIIGIS…GTNTHAIFEQ (427 aa)) enclose the Ketosynthase family 3 (KS3) 1 domain. Residues Cys-1932, His-2068, and His-2108 each act as for beta-ketoacyl synthase 1 activity in the active site. Positions 2374–2499 (HPLLHQNTSD…GSAELASAAE (126 aa)) are N-terminal hotdog fold. A PKS/mFAS DH domain is found at 2374 to 2661 (HPLLHQNTSD…TRVLEGEVHT (288 aa)). The active-site Proton acceptor; for dehydratase activity is His-2403. The segment at 2513 to 2661 (GKGKMSPDQF…TRVLEGEVHT (149 aa)) is C-terminal hotdog fold. The Proton donor; for dehydratase activity role is filled by Asp-2575. 2 Carrier domains span residues 3114–3188 (RKLE…VAAY) and 3212–3286 (SSLE…TVEH). 2 positions are modified to O-(pantetheine 4'-phosphoryl)serine: Ser-3148 and Ser-3246. The disordered stretch occupies residues 3291 to 3314 (VQEREKPEGQEELQTKSSEAPKIT). The Ketosynthase family 3 (KS3) 2 domain occupies 3339–3779 (FEPVAIVGIS…GVNAHIVIEE (441 aa)). Residues Cys-3511, His-3646, and His-3695 each act as for beta-ketoacyl synthase 2 activity in the active site. Residues 3839–3872 (REEMDERLACVAGTMQELEEKLQAFVDGKEETDE) are a coiled coil. Residues 4459–4536 (GLLSETQSWL…RFADWLIGSY (78 aa)) enclose the Carrier 5 domain. The residue at position 4496 (Ser-4496) is an O-(pantetheine 4'-phosphoryl)serine. Residues 4588–4992 (AEGIAVVGLS…GTNAHVIVEA (405 aa)) form the Ketosynthase family 3 (KS3) 3 domain. The For beta-ketoacyl synthase 3 activity role is filled by Cys-4743.

It belongs to the ATP-dependent AMP-binding enzyme family. The cofactor is pantetheine 4'-phosphate.

It is found in the cytoplasm. It functions in the pathway antibiotic biosynthesis; bacillaene biosynthesis. Functionally, involved in some intermediate steps for the synthesis of the antibiotic polyketide bacillaene which is involved in secondary metabolism. This Bacillus subtilis (strain 168) protein is Polyketide synthase PksJ (pksJ).